The following is a 100-amino-acid chain: NADH-quinone oxidoreductase subunit K (100 aa).

The next 3 helical transmembrane spans lie at 4-24, 28-48, and 60-80; these read LQHG…GLVI, LLFM…AFVV, and VMYI…LALL.

The protein belongs to the complex I subunit 4L family. As to quaternary structure, NDH-1 is composed of 13 different subunits. Subunits NuoA, H, J, K, L, M, N constitute the membrane sector of the complex.

It is found in the cell inner membrane. It carries out the reaction a quinone + NADH + 5 H(+)(in) = a quinol + NAD(+) + 4 H(+)(out). Functionally, NDH-1 shuttles electrons from NADH, via FMN and iron-sulfur (Fe-S) centers, to quinones in the respiratory chain. The immediate electron acceptor for the enzyme in this species is believed to be ubiquinone. Couples the redox reaction to proton translocation (for every two electrons transferred, four hydrogen ions are translocated across the cytoplasmic membrane), and thus conserves the redox energy in a proton gradient. This Shigella sonnei (strain Ss046) protein is NADH-quinone oxidoreductase subunit K.